A 521-amino-acid polypeptide reads, in one-letter code: UDP-N-acetylmuramoyl-L-alanyl-D-glutamate--2,6-diaminopimelate ligase (521 aa).

Ser-33 provides a ligand contact to UDP-N-acetyl-alpha-D-muramoyl-L-alanyl-D-glutamate. 116–122 (GTNGKTT) serves as a coordination point for ATP. UDP-N-acetyl-alpha-D-muramoyl-L-alanyl-D-glutamate is bound by residues 158–159 (TT), Ser-185, Gln-191, and Arg-193. Lys-225 is modified (N6-carboxylysine). Meso-2,6-diaminopimelate-binding positions include Arg-409, 433–436 (DNPR), Gly-483, and Glu-487. A Meso-diaminopimelate recognition motif motif is present at residues 433 to 436 (DNPR).

The protein belongs to the MurCDEF family. MurE subfamily. Mg(2+) is required as a cofactor. Carboxylation is probably crucial for Mg(2+) binding and, consequently, for the gamma-phosphate positioning of ATP.

The protein localises to the cytoplasm. The enzyme catalyses UDP-N-acetyl-alpha-D-muramoyl-L-alanyl-D-glutamate + meso-2,6-diaminopimelate + ATP = UDP-N-acetyl-alpha-D-muramoyl-L-alanyl-gamma-D-glutamyl-meso-2,6-diaminopimelate + ADP + phosphate + H(+). It participates in cell wall biogenesis; peptidoglycan biosynthesis. In terms of biological role, catalyzes the addition of meso-diaminopimelic acid to the nucleotide precursor UDP-N-acetylmuramoyl-L-alanyl-D-glutamate (UMAG) in the biosynthesis of bacterial cell-wall peptidoglycan. This chain is UDP-N-acetylmuramoyl-L-alanyl-D-glutamate--2,6-diaminopimelate ligase, found in Nitrosomonas europaea (strain ATCC 19718 / CIP 103999 / KCTC 2705 / NBRC 14298).